Consider the following 26-residue polypeptide: Aldehyde dehydrogenase beta chain (26 aa).

Heterotrimer composed of an alpha, a beta and a gamma chain. It depends on FAD as a cofactor.

The enzyme catalyses an aldehyde + a quinone + H2O = a quinol + a carboxylate + H(+). In Amycolatopsis methanolica, this protein is Aldehyde dehydrogenase beta chain.